The following is a 126-amino-acid chain: Acidic phospholipase A2 S1E6-b (126 aa).

An N-terminal signal peptide occupies residues 1-3 (VEG). Disulfide bonds link cysteine 29–cysteine 119, cysteine 31–cysteine 47, cysteine 46–cysteine 98, cysteine 52–cysteine 126, cysteine 53–cysteine 91, cysteine 60–cysteine 84, and cysteine 78–cysteine 89. Ca(2+)-binding residues include tyrosine 30, glycine 32, and glycine 34. Histidine 50 is a catalytic residue. Aspartate 51 lines the Ca(2+) pocket. The active site involves aspartate 92.

In terms of assembly, homodimer. It depends on Ca(2+) as a cofactor. As to expression, expressed by the venom gland.

The protein resides in the secreted. It catalyses the reaction a 1,2-diacyl-sn-glycero-3-phosphocholine + H2O = a 1-acyl-sn-glycero-3-phosphocholine + a fatty acid + H(+). Snake venom phospholipase that inhibits ADP-induced platelet aggregation. PLA2 catalyzes the calcium-dependent hydrolysis of the 2-acyl groups in 3-sn-phosphoglycerides. This Calloselasma rhodostoma (Malayan pit viper) protein is Acidic phospholipase A2 S1E6-b.